Consider the following 161-residue polypeptide: Ferric uptake regulation protein 1 (161 aa).

Zn(2+) contacts are provided by cysteine 94 and cysteine 97.

The protein belongs to the Fur family.

Its subcellular location is the cytoplasm. Acts as a global negative controlling element, employing Fe(2+) as a cofactor to bind the operator of the repressed genes. The polypeptide is Ferric uptake regulation protein 1 (fur1) (Mycolicibacterium fortuitum (Mycobacterium fortuitum)).